A 102-amino-acid chain; its full sequence is Small ribosomal subunit protein uS10 (102 aa).

The protein belongs to the universal ribosomal protein uS10 family. As to quaternary structure, part of the 30S ribosomal subunit.

In terms of biological role, involved in the binding of tRNA to the ribosomes. The protein is Small ribosomal subunit protein uS10 of Thermosipho melanesiensis (strain DSM 12029 / CIP 104789 / BI429).